A 391-amino-acid chain; its full sequence is MSHRKFEAPRHGSLGFRPRRRTRHHRGRCRSFPKDDPSKKPHLTAFTGFKAGMTHILREVDRSGSRHNKKEVVEAVTVIECPPMTIVGVVGYIDTPRGLRALTTVWAKTIDNNTKKRFYKNWANSNKKAFTHHEKNFDQKAQDLLLKRIEKYCSVVRVIAHTNMSKLNLRQKKNHILEIQVNGGKVAEKVAFAKSLLEKEVKVDSIFAENEMLDVLGVTKGKGFAGVIKRFGVKHLQKKTHRGYRKVGCIGAWHPSRIRFTVPRAGQLGYHHRTETNKKVYRVGKGDDASNASTAGDVTDKAITPLGGFPHYGVVKNDFIMIKGCCVGPKKRVLTLRKSIIPQTHGAAKEIINLKFIDTSSKIGHGRFQTVEEKDKFFGRDRTKKVEAKSE.

Over residues 1 to 10 (MSHRKFEAPR) the composition is skewed to basic and acidic residues. Positions 1 to 41 (MSHRKFEAPRHGSLGFRPRRRTRHHRGRCRSFPKDDPSKKP) are disordered. Positions 17 to 31 (RPRRRTRHHRGRCRS) are enriched in basic residues.

It belongs to the universal ribosomal protein uL3 family.

It localises to the cytoplasm. In terms of biological role, the L3 protein is a component of the large subunit of cytoplasmic ribosomes. The sequence is that of Large ribosomal subunit protein uL3 (RPL3) from Tetrahymena thermophila.